The primary structure comprises 492 residues: GMP reductase (492 aa).

NADP(+) contacts are provided by residues 30 to 31 and R78; that span reads SR. 2 consecutive CBS domains span residues 99 to 162 and 164 to 223; these read LIED…LVET and MTPV…LNAT. Residues 260–262 and 313–314 each bind NADP(+); these read DIA and VG. Residues G314, G316, and C319 each contribute to the K(+) site. The active-site Thioimidate intermediate is the C319. T321 functions as the Proton donor/acceptor in the catalytic mechanism. Residue R322 coordinates K(+). Residues 352–354, 375–376, and 401–403 contribute to the GMP site; these read DGG, GN, and GMA. NADP(+) contacts are provided by residues M402 and 454–457; that span reads SGIS. The Microbody targeting signal signature appears at 490-492; the sequence is SKL.

The protein belongs to the IMPDH/GMPR family. GuaC type 1 subfamily. Homotetramer.

It is found in the glycosome. The catalysed reaction is IMP + NH4(+) + NADP(+) = GMP + NADPH + 2 H(+). Its activity is regulated as follows. Activated by GTP and inhibited by ATP and IMP. Mycophenolic acid (MPA) is a competitive inhibitor of the enzyme with respect to NADPH. Functionally, catalyzes the irreversible NADPH-dependent deamination of GMP to IMP. It functions in the conversion of nucleobase, nucleoside and nucleotide derivatives of G to A nucleotides, and in maintaining the intracellular balance of A and G nucleotides. In Leishmania major, this protein is GMP reductase.